A 97-amino-acid chain; its full sequence is Large ribosomal subunit protein eL21 (97 aa).

Belongs to the eukaryotic ribosomal protein eL21 family.

The sequence is that of Large ribosomal subunit protein eL21 from Methanococcus aeolicus (strain ATCC BAA-1280 / DSM 17508 / OCM 812 / Nankai-3).